The sequence spans 205 residues: Purine catabolism protein PucB (205 aa).

The protein operates within purine metabolism; hypoxanthine degradation. Required for xanthine dehydrogenase activity. Could be involved in formation of the molybdenum cofactor required by xanthine dehydrogenase. In Bacillus subtilis (strain 168), this protein is Purine catabolism protein PucB (pucB).